Here is a 287-residue protein sequence, read N- to C-terminus: Large ribosomal subunit protein uL5m (287 aa).

The N-terminal 18 residues, 1-18 (MLGIRKNIRISVNFLQRR), are a transit peptide targeting the mitochondrion. Basic and acidic residues predominate over residues 80–89 (DEHTQKDRLP). The disordered stretch occupies residues 80-109 (DEHTQKDRLPRWIGDNPYYKNRPPQKMRGN).

Belongs to the universal ribosomal protein uL5 family. As to quaternary structure, component of the mitochondrial large ribosomal subunit (mt-LSU). Mature yeast 74S mitochondrial ribosomes consist of a small (37S) and a large (54S) subunit. The 37S small subunit contains a 15S ribosomal RNA (15S mt-rRNA) and at least 32 different proteins. The 54S large subunit contains a 21S rRNA (21S mt-rRNA) and at least 45 different proteins. Unlike bacterial L5, uL5m does not bind zinc.

The protein localises to the mitochondrion. Component of the mitochondrial ribosome (mitoribosome), a dedicated translation machinery responsible for the synthesis of mitochondrial genome-encoded proteins, including at least some of the essential transmembrane subunits of the mitochondrial respiratory chain. The mitoribosomes are attached to the mitochondrial inner membrane and translation products are cotranslationally integrated into the membrane. The chain is Large ribosomal subunit protein uL5m (mrpl7) from Schizosaccharomyces pombe (strain 972 / ATCC 24843) (Fission yeast).